The primary structure comprises 282 residues: Biotin synthase (282 aa).

One can recognise a Radical SAM core domain in the interval Met1–Arg228. Residues Cys17, Cys21, and Cys24 each coordinate [4Fe-4S] cluster. [2Fe-2S] cluster is bound by residues Cys61, Cys96, Cys154, and Arg221.

Belongs to the radical SAM superfamily. Biotin synthase family. In terms of assembly, homodimer. [4Fe-4S] cluster is required as a cofactor. [2Fe-2S] cluster serves as cofactor.

The catalysed reaction is (4R,5S)-dethiobiotin + (sulfur carrier)-SH + 2 reduced [2Fe-2S]-[ferredoxin] + 2 S-adenosyl-L-methionine = (sulfur carrier)-H + biotin + 2 5'-deoxyadenosine + 2 L-methionine + 2 oxidized [2Fe-2S]-[ferredoxin]. It participates in cofactor biosynthesis; biotin biosynthesis; biotin from 7,8-diaminononanoate: step 2/2. Catalyzes the conversion of dethiobiotin (DTB) to biotin by the insertion of a sulfur atom into dethiobiotin via a radical-based mechanism. The protein is Biotin synthase of Helicobacter pylori (strain Shi470).